The sequence spans 60 residues: Large ribosomal subunit protein uL30 (60 aa).

This sequence belongs to the universal ribosomal protein uL30 family. Part of the 50S ribosomal subunit.

The chain is Large ribosomal subunit protein uL30 from Streptococcus thermophilus (strain CNRZ 1066).